We begin with the raw amino-acid sequence, 276 residues long: DNA repair protein RecO (276 aa).

Belongs to the RecO family.

Involved in DNA repair and RecF pathway recombination. The chain is DNA repair protein RecO from Mycobacterium sp. (strain JLS).